Consider the following 180-residue polypeptide: Bifunctional bis(5'-adenosyl)-triphosphatase/adenylylsulfatase FHIT (180 aa).

Residues 27–134 enclose the HIT domain; that stretch reads SYAFGPYKID…LPRKGGDFEK (108 aa). Asn52 and Gln108 together coordinate substrate. The Histidine triad motif signature appears at 119-123; that stretch reads HVHIH. The active-site Tele-AMP-histidine intermediate is His121. His123 serves as a coordination point for substrate.

The catalysed reaction is P(1),P(3)-bis(5'-adenosyl) triphosphate + H2O = AMP + ADP + 2 H(+). It carries out the reaction adenosine 5'-phosphosulfate + H2O = sulfate + AMP + 2 H(+). The enzyme catalyses adenosine 5'-phosphosulfate + NH4(+) = adenosine 5'-phosphoramidate + sulfate + 2 H(+). It catalyses the reaction adenosine 5'-phosphoramidate + H2O = AMP + NH4(+). In terms of biological role, possesses dinucleoside triphosphate hydrolase activity. Cleaves P(1)-P(3)-bis(5'-adenosyl) triphosphate (Ap3A) to yield AMP and ADP. Exhibits adenylylsulfatase activity, hydrolyzing adenosine 5'-phosphosulfate to yield AMP and sulfate. Exhibits adenosine 5'-monophosphoramidase activity, hydrolyzing purine nucleotide phosphoramidates with a single phosphate group such as adenosine 5'monophosphoramidate (AMP-NH2) to yield AMP and NH2. Exhibits adenylylsulfate-ammonia adenylyltransferase, catalyzing the ammonolysis of adenosine 5'-phosphosulfate resulting in the formation of adenosine 5'-phosphoramidate. The chain is Bifunctional bis(5'-adenosyl)-triphosphatase/adenylylsulfatase FHIT from Arabidopsis thaliana (Mouse-ear cress).